Reading from the N-terminus, the 185-residue chain is Ribosome-recycling factor (185 aa).

It belongs to the RRF family.

The protein localises to the cytoplasm. Its function is as follows. Responsible for the release of ribosomes from messenger RNA at the termination of protein biosynthesis. May increase the efficiency of translation by recycling ribosomes from one round of translation to another. This Halalkalibacterium halodurans (strain ATCC BAA-125 / DSM 18197 / FERM 7344 / JCM 9153 / C-125) (Bacillus halodurans) protein is Ribosome-recycling factor.